A 252-amino-acid chain; its full sequence is Probable transcriptional regulatory protein THA_1246 (252 aa).

Belongs to the TACO1 family.

The protein resides in the cytoplasm. This Thermosipho africanus (strain TCF52B) protein is Probable transcriptional regulatory protein THA_1246.